A 397-amino-acid chain; its full sequence is Tryptophan synthase beta chain (397 aa).

At Lys91 the chain carries N6-(pyridoxal phosphate)lysine.

Belongs to the TrpB family. Tetramer of two alpha and two beta chains. Pyridoxal 5'-phosphate is required as a cofactor.

The enzyme catalyses (1S,2R)-1-C-(indol-3-yl)glycerol 3-phosphate + L-serine = D-glyceraldehyde 3-phosphate + L-tryptophan + H2O. Its pathway is amino-acid biosynthesis; L-tryptophan biosynthesis; L-tryptophan from chorismate: step 5/5. Its function is as follows. The beta subunit is responsible for the synthesis of L-tryptophan from indole and L-serine. The chain is Tryptophan synthase beta chain from Bacillus thuringiensis (strain Al Hakam).